Reading from the N-terminus, the 152-residue chain is Transcriptional regulator MraZ (152 aa).

SpoVT-AbrB domains follow at residues 7–51 and 89–132; these read KERH…APDR and LEMV…DPQR.

It belongs to the MraZ family. As to quaternary structure, forms oligomers.

The protein resides in the cytoplasm. The protein localises to the nucleoid. This is Transcriptional regulator MraZ from Pelodictyon phaeoclathratiforme (strain DSM 5477 / BU-1).